The following is a 751-amino-acid chain: Phosphoribosylformylglycinamidine synthase subunit PurL (751 aa).

The active site involves H54. Y57 and K106 together coordinate ATP. E108 is a binding site for Mg(2+). Residues 109-112 and R131 each bind substrate; that span reads SHNH. The active-site Proton acceptor is the H110. D132 provides a ligand contact to Mg(2+). Substrate is bound at residue Q256. D284 is a Mg(2+) binding site. 328 to 330 is a substrate binding site; sequence ESQ. ATP is bound by residues D516 and G553. Mg(2+) is bound at residue N554. S556 contributes to the substrate binding site.

The protein belongs to the FGAMS family. In terms of assembly, monomer. Part of the FGAM synthase complex composed of 1 PurL, 1 PurQ and 2 PurS subunits.

It localises to the cytoplasm. The catalysed reaction is N(2)-formyl-N(1)-(5-phospho-beta-D-ribosyl)glycinamide + L-glutamine + ATP + H2O = 2-formamido-N(1)-(5-O-phospho-beta-D-ribosyl)acetamidine + L-glutamate + ADP + phosphate + H(+). It participates in purine metabolism; IMP biosynthesis via de novo pathway; 5-amino-1-(5-phospho-D-ribosyl)imidazole from N(2)-formyl-N(1)-(5-phospho-D-ribosyl)glycinamide: step 1/2. Functionally, part of the phosphoribosylformylglycinamidine synthase complex involved in the purines biosynthetic pathway. Catalyzes the ATP-dependent conversion of formylglycinamide ribonucleotide (FGAR) and glutamine to yield formylglycinamidine ribonucleotide (FGAM) and glutamate. The FGAM synthase complex is composed of three subunits. PurQ produces an ammonia molecule by converting glutamine to glutamate. PurL transfers the ammonia molecule to FGAR to form FGAM in an ATP-dependent manner. PurS interacts with PurQ and PurL and is thought to assist in the transfer of the ammonia molecule from PurQ to PurL. The chain is Phosphoribosylformylglycinamidine synthase subunit PurL from Nocardioides sp. (strain ATCC BAA-499 / JS614).